Consider the following 380-residue polypeptide: E3 ubiquitin-protein ligase PHF7 (380 aa).

The tract at residues 1–23 is disordered; the sequence is MRTIKEKKEHPRLRKTARTKKVT. Residues 10–23 show a composition bias toward basic residues; sequence HPRLRKTARTKKVT. The C2HC pre-PHD-type zinc-finger motif lies at 30-68; the sequence is GPVCLLCFQEPGDPEKLGEFLQKDNLCVHYFCLILSSKL. Cys33, Cys36, His58, and Cys61 together coordinate Zn(2+). The interval 67–92 is required for interaction and ubiquitination of the nucleosome core particle; sequence KLPQKGQPNRGLHGFMPEDIKKEAAR. The segment at 96 to 145 adopts a PHD-type zinc-finger fold; that stretch reads KVCFVCKRKGAAIRCQKDQCVQNFHLPCGQERGCLSQFFGEYKSYCGKHR. Zn(2+) contacts are provided by Cys98, Cys101, Cys110, Cys115, His120, Cys123, Cys141, His144, Cys159, Cys162, Cys178, Cys179, His185, Cys188, Cys203, Cys206, Cys247, Cys252, Cys272, Cys275, His281, Cys284, Cys296, and Cys299. A required for interaction with ubiquitinated UBE2D2 region spans residues 150-306; that stretch reads IHQRSFGESC…NECLPASTED (157 aa). Residues 159–207 form an RING-type; degenerate zinc finger; it reads CVLCCEDLSRASVENIRSPCCSQAIYHRKCIQKYAHTSAKHFFKCPQCN. Positions 243 to 300 are required for association with and ubiquitination of H3; sequence RYQHCDAPICLYEQGRDSFEDEGRWRLILCATCGSHGTHRDCSSLRPNSKKWECNECL. Residues 352–367 show a composition bias toward low complexity; that stretch reads EKPESSSGSSCQSWRS. Residues 352–380 are disordered; that stretch reads EKPESSSGSSCQSWRSKGIKVTKDCKKSK.

Interacts with MEF2C; the interaction promotes MEF2C binding to its transcription targets. Interacts with GATA4; the interaction promotes GATA4 binding to its transcription targets. Interacts with UBE2D2; the interaction inhibits cleavage of PHF7 and promotes association of the complex with the nucleosome core particle.

It is found in the nucleus. The catalysed reaction is S-ubiquitinyl-[E2 ubiquitin-conjugating enzyme]-L-cysteine + [acceptor protein]-L-lysine = [E2 ubiquitin-conjugating enzyme]-L-cysteine + N(6)-ubiquitinyl-[acceptor protein]-L-lysine.. The protein operates within protein modification; protein ubiquitination. Functionally, E3 ubiquitin-protein ligase which ubiquitinates histone H3 at 'Lys-14'. Required for male fertility, via inhibition of SPOP-mediated BRDT degradation when in the presence of acetylated histone H4 in early condensing spermatids. Stabilization of BRDT allows it to facilitate histone removal in early condensing spermatids and promote the progression of histone-to-protamine exchange. Promotes the expression of steroidogenesis proteins in the testes, and as a result plays a role in maintaining testosterone levels and repressing osteoclastogenesis. Promotes transcription of cardiac enhancer genes by facilitating binding of cardiac transcription factors such as MEF2C and GATA4 to target gene promoters. Ubiquitinates histone H4. Ubiquitinates histone H2A and H3 as part of the nucleosome core particle. This is E3 ubiquitin-protein ligase PHF7 from Rattus norvegicus (Rat).